The primary structure comprises 148 residues: D-aminoacyl-tRNA deacylase (148 aa).

The short motif at 137 to 138 (GP) is the Gly-cisPro motif, important for rejection of L-amino acids element.

This sequence belongs to the DTD family. Homodimer.

The protein resides in the cytoplasm. It catalyses the reaction glycyl-tRNA(Ala) + H2O = tRNA(Ala) + glycine + H(+). It carries out the reaction a D-aminoacyl-tRNA + H2O = a tRNA + a D-alpha-amino acid + H(+). In terms of biological role, an aminoacyl-tRNA editing enzyme that deacylates mischarged D-aminoacyl-tRNAs. Also deacylates mischarged glycyl-tRNA(Ala), protecting cells against glycine mischarging by AlaRS. Acts via tRNA-based rather than protein-based catalysis; rejects L-amino acids rather than detecting D-amino acids in the active site. By recycling D-aminoacyl-tRNA to D-amino acids and free tRNA molecules, this enzyme counteracts the toxicity associated with the formation of D-aminoacyl-tRNA entities in vivo and helps enforce protein L-homochirality. This is D-aminoacyl-tRNA deacylase from Enterococcus faecalis (strain ATCC 700802 / V583).